Here is a 219-residue protein sequence, read N- to C-terminus: Ribosome maturation factor RimP (219 aa).

The tract at residues 195 to 219 is disordered; that stretch reads EGRIPGDDLGAEPEDAASTETQEKK.

It belongs to the RimP family.

The protein resides in the cytoplasm. Required for maturation of 30S ribosomal subunits. The sequence is that of Ribosome maturation factor RimP from Brucella melitensis biotype 2 (strain ATCC 23457).